A 284-amino-acid chain; its full sequence is 2-dehydro-3-deoxyphosphooctonate aldolase (284 aa).

The protein belongs to the KdsA family.

The protein resides in the cytoplasm. It catalyses the reaction D-arabinose 5-phosphate + phosphoenolpyruvate + H2O = 3-deoxy-alpha-D-manno-2-octulosonate-8-phosphate + phosphate. It participates in carbohydrate biosynthesis; 3-deoxy-D-manno-octulosonate biosynthesis; 3-deoxy-D-manno-octulosonate from D-ribulose 5-phosphate: step 2/3. It functions in the pathway bacterial outer membrane biogenesis; lipopolysaccharide biosynthesis. This is 2-dehydro-3-deoxyphosphooctonate aldolase from Escherichia fergusonii (strain ATCC 35469 / DSM 13698 / CCUG 18766 / IAM 14443 / JCM 21226 / LMG 7866 / NBRC 102419 / NCTC 12128 / CDC 0568-73).